The primary structure comprises 400 residues: Formate-dependent phosphoribosylglycinamide formyltransferase (400 aa).

N(1)-(5-phospho-beta-D-ribosyl)glycinamide contacts are provided by residues 22–23 (EL) and E82. ATP is bound by residues R115, K157, 162–167 (SSGKGQ), 197–200 (EGFV), and E205. Positions 120–315 (RLAAETLGVP…EFELHARAIL (196 aa)) constitute an ATP-grasp domain. The Mg(2+) site is built by E274 and E286. Residues D293, K362, and 369–370 (RR) contribute to the N(1)-(5-phospho-beta-D-ribosyl)glycinamide site.

This sequence belongs to the PurK/PurT family. In terms of assembly, homodimer.

It carries out the reaction N(1)-(5-phospho-beta-D-ribosyl)glycinamide + formate + ATP = N(2)-formyl-N(1)-(5-phospho-beta-D-ribosyl)glycinamide + ADP + phosphate + H(+). It participates in purine metabolism; IMP biosynthesis via de novo pathway; N(2)-formyl-N(1)-(5-phospho-D-ribosyl)glycinamide from N(1)-(5-phospho-D-ribosyl)glycinamide (formate route): step 1/1. In terms of biological role, involved in the de novo purine biosynthesis. Catalyzes the transfer of formate to 5-phospho-ribosyl-glycinamide (GAR), producing 5-phospho-ribosyl-N-formylglycinamide (FGAR). Formate is provided by PurU via hydrolysis of 10-formyl-tetrahydrofolate. This Mycolicibacterium smegmatis (strain ATCC 700084 / mc(2)155) (Mycobacterium smegmatis) protein is Formate-dependent phosphoribosylglycinamide formyltransferase.